The sequence spans 498 residues: N-succinylglutamate 5-semialdehyde dehydrogenase 1 (498 aa).

Residue 231–236 (GSSNTG) participates in NAD(+) binding. Active-site residues include Glu-254 and Cys-288.

This sequence belongs to the aldehyde dehydrogenase family. AstD subfamily.

It catalyses the reaction N-succinyl-L-glutamate 5-semialdehyde + NAD(+) + H2O = N-succinyl-L-glutamate + NADH + 2 H(+). It participates in amino-acid degradation; L-arginine degradation via AST pathway; L-glutamate and succinate from L-arginine: step 4/5. Functionally, catalyzes the NAD-dependent reduction of succinylglutamate semialdehyde into succinylglutamate. The chain is N-succinylglutamate 5-semialdehyde dehydrogenase 1 from Shewanella denitrificans (strain OS217 / ATCC BAA-1090 / DSM 15013).